Consider the following 111-residue polypeptide: Putative membrane protein insertion efficiency factor (111 aa).

The protein belongs to the UPF0161 family.

The protein localises to the cell inner membrane. In terms of biological role, could be involved in insertion of integral membrane proteins into the membrane. This Methylobacterium nodulans (strain LMG 21967 / CNCM I-2342 / ORS 2060) protein is Putative membrane protein insertion efficiency factor.